Reading from the N-terminus, the 520-residue chain is Probable kinase 098L (520 aa).

A Protein kinase domain is found at 82 to 393 (LTSVQSFGSK…NSPLLKKGFV (312 aa)). Residues 88–96 (FGSKSKQGI) and K111 each bind ATP. D205 functions as the Proton acceptor in the catalytic mechanism. Residues 416 to 442 (QTAQLIETDKEILDNLIDDLELKIVRK) are a coiled coil.

It belongs to the protein kinase superfamily.

In terms of biological role, probable kinase. This is Probable kinase 098L from Aedes vexans (Inland floodwater mosquito).